A 450-amino-acid polypeptide reads, in one-letter code: Phosphoglucosamine mutase (450 aa).

Ser103 serves as the catalytic Phosphoserine intermediate. Mg(2+) contacts are provided by Ser103, Asp243, Asp245, and Asp247. Ser103 carries the post-translational modification Phosphoserine.

Belongs to the phosphohexose mutase family. The cofactor is Mg(2+). Post-translationally, activated by phosphorylation.

The enzyme catalyses alpha-D-glucosamine 1-phosphate = D-glucosamine 6-phosphate. Functionally, catalyzes the conversion of glucosamine-6-phosphate to glucosamine-1-phosphate. This is Phosphoglucosamine mutase from Lactobacillus helveticus (strain DPC 4571).